A 290-amino-acid polypeptide reads, in one-letter code: 4-diphosphocytidyl-2-C-methyl-D-erythritol kinase (290 aa).

K20 is a catalytic residue. Residue 104–114 (PMGGGLGGGSS) participates in ATP binding. The active site involves D146.

Belongs to the GHMP kinase family. IspE subfamily.

It catalyses the reaction 4-CDP-2-C-methyl-D-erythritol + ATP = 4-CDP-2-C-methyl-D-erythritol 2-phosphate + ADP + H(+). The protein operates within isoprenoid biosynthesis; isopentenyl diphosphate biosynthesis via DXP pathway; isopentenyl diphosphate from 1-deoxy-D-xylulose 5-phosphate: step 3/6. Its function is as follows. Catalyzes the phosphorylation of the position 2 hydroxy group of 4-diphosphocytidyl-2C-methyl-D-erythritol. The chain is 4-diphosphocytidyl-2-C-methyl-D-erythritol kinase from Shewanella frigidimarina (strain NCIMB 400).